Here is a 355-residue protein sequence, read N- to C-terminus: NADH-quinone oxidoreductase subunit H (355 aa).

8 consecutive transmembrane segments (helical) span residues 25 to 45 (VVRI…LILW), 91 to 111 (WLYL…WAVI), 126 to 146 (LLYA…AGWA), 170 to 190 (MGFA…SEIV), 205 to 225 (FLSW…ISGI), 253 to 273 (MAFA…SALA), 290 to 310 (FIPG…VFIW), and 330 to 350 (VFLP…MSPL).

It belongs to the complex I subunit 1 family. NDH-1 is composed of 14 different subunits. Subunits NuoA, H, J, K, L, M, N constitute the membrane sector of the complex.

Its subcellular location is the cell inner membrane. The enzyme catalyses a quinone + NADH + 5 H(+)(in) = a quinol + NAD(+) + 4 H(+)(out). Its function is as follows. NDH-1 shuttles electrons from NADH, via FMN and iron-sulfur (Fe-S) centers, to quinones in the respiratory chain. The immediate electron acceptor for the enzyme in this species is believed to be ubiquinone. Couples the redox reaction to proton translocation (for every two electrons transferred, four hydrogen ions are translocated across the cytoplasmic membrane), and thus conserves the redox energy in a proton gradient. This subunit may bind ubiquinone. The sequence is that of NADH-quinone oxidoreductase subunit H from Burkholderia cenocepacia (strain ATCC BAA-245 / DSM 16553 / LMG 16656 / NCTC 13227 / J2315 / CF5610) (Burkholderia cepacia (strain J2315)).